Here is a 526-residue protein sequence, read N- to C-terminus: MSYSQQVNKRRTFAIISHPDAGKTTITEKVLLYGNAIQKAGSVKGKGSQAHAKSDWMEMEKQRGISITTSVMQFPYHDCLVNLLDTPGHEDFSEDTYRTLTAVDSCLMVIDSAKGVEERTIKLMEVTRLRDTPILTFMNKLDRDIRDPMELLDEVESVLKIRCAPITWPIGCGKLFKGVYHLYKDETYLYQSGQGHTIQDVRIIKGLNNVDLDRAVGEDLARQLRDELELVKGASNEFDHDLFIRGELTPVFFGTALGNFGVDHFLDGLTQWAPAPQARQADCRLVESAEEKLTGFVFKIQANMDPKHRDRVAFMRIVSGKYEKGMKLKQVRLGKEVVLSDALTFMAGDRSHAEEAYAGDIIGLHNHGTIQIGDTFTQGEDLKFTGIPNFAPELFRRIRLKDPLKQKQLLKGLVQLSEEGAVQVFRPLTNNDLIVGAVGVLQFDVVVSRLKSEYNVEAVYETVNVAAARWVECSEAKKLEEFKRKNEQNLALDGGDSLTYIAPTMVNLNLTQERYPDIQFFKTREH.

One can recognise a tr-type G domain in the interval 8 to 277; it reads NKRRTFAIIS…GLTQWAPAPQ (270 aa). GTP is bound by residues 17–24, 85–89, and 139–142; these read SHPDAGKT, DTPGH, and NKLD.

This sequence belongs to the TRAFAC class translation factor GTPase superfamily. Classic translation factor GTPase family. PrfC subfamily.

It localises to the cytoplasm. Functionally, increases the formation of ribosomal termination complexes and stimulates activities of RF-1 and RF-2. It binds guanine nucleotides and has strong preference for UGA stop codons. It may interact directly with the ribosome. The stimulation of RF-1 and RF-2 is significantly reduced by GTP and GDP, but not by GMP. This chain is Peptide chain release factor 3, found in Histophilus somni (strain 129Pt) (Haemophilus somnus).